Consider the following 253-residue polypeptide: Sulfate transporter CysZ (253 aa).

4 helical membrane passes run 31–51, 75–95, 151–171, and 222–242; these read FVILPLLVNILLMGGAFWWLF, LLWPLAVISVLLVFGYFFSTI, IVLLILYFIPGIGQTVAPVLW, and IPLLNLFIMPVAVCGATAMWV.

Belongs to the CysZ family.

It localises to the cell inner membrane. Functionally, high affinity, high specificity proton-dependent sulfate transporter, which mediates sulfate uptake. Provides the sulfur source for the cysteine synthesis pathway. The protein is Sulfate transporter CysZ of Escherichia coli O7:K1 (strain IAI39 / ExPEC).